Reading from the N-terminus, the 144-residue chain is Bacilliredoxin SH1478 (144 aa).

The protein belongs to the bacilliredoxin family.

The protein is Bacilliredoxin SH1478 of Staphylococcus haemolyticus (strain JCSC1435).